Consider the following 164-residue polypeptide: Class I hydrophobin rodA (164 aa).

The signal sequence occupies residues 1-18; it reads MQFSISALVLGLAATVYA. A glycan (N-linked (GlcNAc...) asparagine) is linked at Asn50. Cystine bridges form between Cys60-Cys138, Cys68-Cys132, Cys69-Cys109, and Cys139-Cys157.

Belongs to the fungal hydrophobin family. As to quaternary structure, self-assembles to form functional amyloid fibrils called rodlets. Self-assembly into fibrillar rodlets occurs spontaneously at hydrophobic:hydrophilic interfaces and the rodlets further associate laterally to form amphipathic monolayers.

The protein localises to the secreted. The protein resides in the cell wall. Aerial growth, conidiation, and dispersal of filamentous fungi in the environment rely upon a capability of their secreting small amphipathic proteins called hydrophobins (HPBs) with low sequence identity. Class I can self-assemble into an outermost layer of rodlet bundles on aerial cell surfaces, conferring cellular hydrophobicity that supports fungal growth, development and dispersal; whereas Class II form highly ordered films at water-air interfaces through intermolecular interactions but contribute nothing to the rodlet structure. RodA is a class I hydrophobin involved in the cell surface hydrophobicity. The surface rodlet layer of the conidial cell wall makes airborne conidia of filamentous fungi inert to both innate and adaptive immunity. The polypeptide is Class I hydrophobin rodA (Penicillium camemberti (strain FM 013)).